The following is a 442-amino-acid chain: Trigger factor (442 aa).

One can recognise a PPIase FKBP-type domain in the interval 163–248 (GDQVVIDFLG…IKEVKAPKAA (86 aa)).

This sequence belongs to the FKBP-type PPIase family. Tig subfamily.

It localises to the cytoplasm. The enzyme catalyses [protein]-peptidylproline (omega=180) = [protein]-peptidylproline (omega=0). Functionally, involved in protein export. Acts as a chaperone by maintaining the newly synthesized protein in an open conformation. Functions as a peptidyl-prolyl cis-trans isomerase. In Dinoroseobacter shibae (strain DSM 16493 / NCIMB 14021 / DFL 12), this protein is Trigger factor.